We begin with the raw amino-acid sequence, 317 residues long: Methionyl-tRNA formyltransferase (317 aa).

110-113 (SLLP) is a binding site for (6S)-5,6,7,8-tetrahydrofolate. The disordered stretch occupies residues 292–317 (RMKGEDFVRGKNVQPGDVLGEANEEN).

It belongs to the Fmt family.

The catalysed reaction is L-methionyl-tRNA(fMet) + (6R)-10-formyltetrahydrofolate = N-formyl-L-methionyl-tRNA(fMet) + (6S)-5,6,7,8-tetrahydrofolate + H(+). In terms of biological role, attaches a formyl group to the free amino group of methionyl-tRNA(fMet). The formyl group appears to play a dual role in the initiator identity of N-formylmethionyl-tRNA by promoting its recognition by IF2 and preventing the misappropriation of this tRNA by the elongation apparatus. The chain is Methionyl-tRNA formyltransferase from Bacillus velezensis (strain DSM 23117 / BGSC 10A6 / LMG 26770 / FZB42) (Bacillus amyloliquefaciens subsp. plantarum).